Consider the following 89-residue polypeptide: Co-chaperonin GroES (89 aa).

It belongs to the GroES chaperonin family. In terms of assembly, heptamer of 7 subunits arranged in a ring. Interacts with the chaperonin GroEL.

It localises to the cytoplasm. In terms of biological role, together with the chaperonin GroEL, plays an essential role in assisting protein folding. The GroEL-GroES system forms a nano-cage that allows encapsulation of the non-native substrate proteins and provides a physical environment optimized to promote and accelerate protein folding. GroES binds to the apical surface of the GroEL ring, thereby capping the opening of the GroEL channel. The protein is Co-chaperonin GroES of Porphyromonas gingivalis (strain ATCC 33277 / DSM 20709 / CIP 103683 / JCM 12257 / NCTC 11834 / 2561).